Here is a 372-residue protein sequence, read N- to C-terminus: Small ribosomal subunit protein mS77 (rPPR2) (372 aa).

Residues 1–28 (MKSFLLSRQAIHRISLLSSKTPTFCRNF) constitute a mitochondrion transit peptide. The disordered stretch occupies residues 240–265 (DNSIRESETVDGEVEEEGFVPSDEVE). Residues 248–257 (TVDGEVEEEG) show a composition bias toward acidic residues.

In terms of assembly, component of the mitochondrial ribosome small subunit.

The protein localises to the mitochondrion. Required for karyogamy during female gametophyte development, when the two polar nuclei fuse to form the diploid central cell nucleus. The polypeptide is Small ribosomal subunit protein mS77 (rPPR2) (Arabidopsis thaliana (Mouse-ear cress)).